The following is a 346-amino-acid chain: tRNA N6-adenosine threonylcarbamoyltransferase (346 aa).

Residues H111 and H115 each contribute to the Fe cation site. Residues L134–G138, D167, G180, and N277 contribute to the substrate site. A Fe cation-binding site is contributed by D305.

This sequence belongs to the KAE1 / TsaD family. Requires Fe(2+) as cofactor.

It localises to the cytoplasm. The enzyme catalyses L-threonylcarbamoyladenylate + adenosine(37) in tRNA = N(6)-L-threonylcarbamoyladenosine(37) in tRNA + AMP + H(+). Functionally, required for the formation of a threonylcarbamoyl group on adenosine at position 37 (t(6)A37) in tRNAs that read codons beginning with adenine. Is involved in the transfer of the threonylcarbamoyl moiety of threonylcarbamoyl-AMP (TC-AMP) to the N6 group of A37, together with TsaE and TsaB. TsaD likely plays a direct catalytic role in this reaction. This chain is tRNA N6-adenosine threonylcarbamoyltransferase, found in Bordetella pertussis (strain Tohama I / ATCC BAA-589 / NCTC 13251).